A 397-amino-acid chain; its full sequence is 8-amino-7-oxononanoate synthase (397 aa).

R23 is a binding site for substrate. 110–111 (GY) is a pyridoxal 5'-phosphate binding site. Residue H135 coordinates substrate. Residues S181, H209, and T237 each coordinate pyridoxal 5'-phosphate. K240 bears the N6-(pyridoxal phosphate)lysine mark. Position 354 (T354) interacts with substrate.

This sequence belongs to the class-II pyridoxal-phosphate-dependent aminotransferase family. BioF subfamily. Homodimer. The cofactor is pyridoxal 5'-phosphate.

The enzyme catalyses 6-carboxyhexanoyl-[ACP] + L-alanine + H(+) = (8S)-8-amino-7-oxononanoate + holo-[ACP] + CO2. The protein operates within cofactor biosynthesis; biotin biosynthesis. Functionally, catalyzes the decarboxylative condensation of pimeloyl-[acyl-carrier protein] and L-alanine to produce 8-amino-7-oxononanoate (AON), [acyl-carrier protein], and carbon dioxide. In Anaeromyxobacter sp. (strain Fw109-5), this protein is 8-amino-7-oxononanoate synthase.